Reading from the N-terminus, the 698-residue chain is Probable threonine--tRNA ligase 2, cytoplasmic (698 aa).

The region spanning 38-100 (GGGNIKLNDG…EMSGKDYNIE (63 aa)) is the TGS domain. The interval 541–560 (NNNNNNNNNNEEINDNNNNN) is disordered.

This sequence belongs to the class-II aminoacyl-tRNA synthetase family.

Its subcellular location is the cytoplasm. The catalysed reaction is tRNA(Thr) + L-threonine + ATP = L-threonyl-tRNA(Thr) + AMP + diphosphate + H(+). This is Probable threonine--tRNA ligase 2, cytoplasmic (thrS2) from Dictyostelium discoideum (Social amoeba).